Reading from the N-terminus, the 306-residue chain is Agmatinase (306 aa).

Mn(2+)-binding residues include H126, D149, H151, D153, D230, and D232.

It belongs to the arginase family. Agmatinase subfamily. Mn(2+) is required as a cofactor.

It carries out the reaction agmatine + H2O = urea + putrescine. Its pathway is amine and polyamine biosynthesis; putrescine biosynthesis via agmatine pathway; putrescine from agmatine: step 1/1. Functionally, catalyzes the formation of putrescine from agmatine. In Escherichia coli O7:K1 (strain IAI39 / ExPEC), this protein is Agmatinase.